A 322-amino-acid polypeptide reads, in one-letter code: Secreted RxLR effector protein RXLR-C17 (322 aa).

The signal sequence occupies residues 1–25; sequence MREPAFSFRLHLFAAMILLVDVFSA. Residues 43–62 carry the RxLR-dEER motif; it reads RQLRARDSQAKNYVIRDEER. Asn-73 carries N-linked (GlcNAc...) asparagine glycosylation.

This sequence belongs to the RxLR effector family.

The protein resides in the secreted. Its subcellular location is the host cytoplasm. The protein localises to the host nucleus. In terms of biological role, secreted effector that suppresses pattern-triggered immunity (PTI) in plant host. The polypeptide is Secreted RxLR effector protein RXLR-C17 (Plasmopara halstedii (Downy mildew of sunflower)).